A 122-amino-acid polypeptide reads, in one-letter code: Large ribosomal subunit protein uL14c (122 aa).

It belongs to the universal ribosomal protein uL14 family. Part of the 50S ribosomal subunit.

The protein resides in the plastid. It localises to the chloroplast. Binds to 23S rRNA. This is Large ribosomal subunit protein uL14c from Zygnema circumcarinatum (Green alga).